A 562-amino-acid chain; its full sequence is Catalase T (562 aa).

Residues H64 and N137 contribute to the active site. Y351 is a binding site for heme.

It belongs to the catalase family. Homotetramer. Requires heme as cofactor.

It localises to the cytoplasm. The enzyme catalyses 2 H2O2 = O2 + 2 H2O. In terms of biological role, occurs in almost all aerobically respiring organisms and serves to protect cells from the toxic effects of hydrogen peroxide. In Saccharomyces cerevisiae (strain YJM789) (Baker's yeast), this protein is Catalase T (CTT1).